The following is a 263-amino-acid chain: tRNA (guanine-N(7)-)-methyltransferase (263 aa).

The segment at 1–39 (MVHHGQMHAQPGVGLRPDTPVASGQLPSTSIRSRRSGIS) is disordered. S-adenosyl-L-methionine is bound by residues glutamate 82, aspartate 107, asparagine 136, and aspartate 159. Aspartate 159 is a catalytic residue. Substrate is bound by residues lysine 163, aspartate 195, and 232 to 235 (TKYE).

Belongs to the class I-like SAM-binding methyltransferase superfamily. TrmB family.

It carries out the reaction guanosine(46) in tRNA + S-adenosyl-L-methionine = N(7)-methylguanosine(46) in tRNA + S-adenosyl-L-homocysteine. It functions in the pathway tRNA modification; N(7)-methylguanine-tRNA biosynthesis. Functionally, catalyzes the formation of N(7)-methylguanine at position 46 (m7G46) in tRNA. The chain is tRNA (guanine-N(7)-)-methyltransferase from Mycobacterium bovis (strain ATCC BAA-935 / AF2122/97).